We begin with the raw amino-acid sequence, 301 residues long: Ribonuclease Z (301 aa).

Zn(2+) contacts are provided by His63, His65, Asp67, His68, His141, Asp204, and His262. The active-site Proton acceptor is Asp67.

It belongs to the RNase Z family. In terms of assembly, homodimer. Zn(2+) is required as a cofactor.

The catalysed reaction is Endonucleolytic cleavage of RNA, removing extra 3' nucleotides from tRNA precursor, generating 3' termini of tRNAs. A 3'-hydroxy group is left at the tRNA terminus and a 5'-phosphoryl group is left at the trailer molecule.. In terms of biological role, zinc phosphodiesterase, which displays some tRNA 3'-processing endonuclease activity. Probably involved in tRNA maturation, by removing a 3'-trailer from precursor tRNA. The sequence is that of Ribonuclease Z from Streptomyces avermitilis (strain ATCC 31267 / DSM 46492 / JCM 5070 / NBRC 14893 / NCIMB 12804 / NRRL 8165 / MA-4680).